A 126-amino-acid polypeptide reads, in one-letter code: Acyl carrier protein 2, mitochondrial (126 aa).

The transit peptide at Met-1–Phe-36 directs the protein to the mitochondrion. One can recognise a Carrier domain in the interval Ser-48 to Pro-123. The residue at position 83 (Ser-83) is an O-(pantetheine 4'-phosphoryl)serine.

It belongs to the acyl carrier protein (ACP) family. As to quaternary structure, complex I is composed of at least 49 different subunits. In terms of processing, 4'-phosphopantetheine is transferred from CoA to a specific serine of the apo-ACP-like protein.

It is found in the mitochondrion. It functions in the pathway lipid metabolism; fatty acid biosynthesis. Carrier of the growing fatty acid chain in fatty acid biosynthesis. May be involved in the synthesis of short and medium chain fatty acids. Accessory and non-catalytic subunit of the mitochondrial membrane respiratory chain NADH dehydrogenase (Complex I), which functions in the transfer of electrons from NADH to the respiratory chain. The protein is Acyl carrier protein 2, mitochondrial (MTACP2) of Arabidopsis thaliana (Mouse-ear cress).